The chain runs to 513 residues: Coniferin beta-glucosidase (513 aa).

Positions 1-23 (MEVSVLMWVLLFYSLLGFQVTTA) are cleaved as a signal peptide. A beta-D-glucoside-binding positions include Gln-44, His-145, and 190–191 (NE). Glu-191 functions as the Proton donor in the catalytic mechanism. The cysteines at positions 210 and 219 are disulfide-linked. Asn-223 carries N-linked (GlcNAc...) asparagine glycosylation. Residues Tyr-336 and Glu-408 each coordinate a beta-D-glucoside. Glu-408 serves as the catalytic Nucleophile. Asn-447 is a glycosylation site (N-linked (GlcNAc...) asparagine). A beta-D-glucoside contacts are provided by residues Trp-457, 464–465 (EW), and Phe-473.

Belongs to the glycosyl hydrolase 1 family. As to quaternary structure, homodimer. Post-translationally, glycosylated.

The enzyme catalyses 4-O-(beta-D-glucosyl)-(E)-coniferol + H2O = (E)-coniferol + D-glucose. Inhibited by glucono-1,5-lactone, but not by bromoconduritol or conduritol B epoxide. Its function is as follows. Involved in the release of monolignols for lignin biosynthesis. Unable to hydrolyze 4-nitrophenyl beta-cellobioside or alpha-linked methylumbelliferyl glucoside. The polypeptide is Coniferin beta-glucosidase (Pinus contorta (Shore pine)).